The following is a 66-amino-acid chain: uncharacterized protein (66 aa).

This is an uncharacterized protein from Vaccinia virus (strain Copenhagen) (VACV).